The sequence spans 109 residues: MGTFRRRRRFLLAALVTFALLHLFSASSIVSADGRWIGQRTGSDLPGGFIRSNKRFGGPGSSPPTCRSKCGKCQPCKPVHVPIQPGLSMPLEYYPEAWRCKCGNKLFMP.

The signal sequence occupies residues 1 to 26; it reads MGTFRRRRRFLLAALVTFALLHLFSA. 3 disulfide bridges follow: Cys-66–Cys-100, Cys-70–Cys-76, and Cys-73–Cys-102.

The protein belongs to the plant cysteine rich small secretory peptide family. Epidermal patterning factor subfamily. Interacts with ERECTA. In terms of tissue distribution, expressed at the base of the apical meristem at 3 days after germination. Not detected in the hypocotyl. Expressed in developing stems soon after bolting, in inflorescence stems and in young siliques.

Its subcellular location is the secreted. Acts primarily as positive regulator of inflorescence growth. Endodermal expression is sufficient for proper inflorescence architecture. Redundantly involved with EPFL6 in procambial development regulation. Controls stomatal patterning. Mediates stomatal development inhibition. TMM (AC Q9SSD1) functions to dampen or block CLL2 signaling. Acts as a growth-regulatory ligand for ERECTA family receptors. The polypeptide is EPIDERMAL PATTERNING FACTOR-like protein 4 (Arabidopsis thaliana (Mouse-ear cress)).